The primary structure comprises 674 residues: DNA ligase (674 aa).

NAD(+) contacts are provided by residues 35-39 (DAEYD), 82-83 (SL), and Glu116. The active-site N6-AMP-lysine intermediate is the Lys118. Residues Arg139, Glu174, Lys282, and Lys306 each coordinate NAD(+). 4 residues coordinate Zn(2+): Cys400, Cys403, Cys418, and Cys424. One can recognise a BRCT domain in the interval 593-674 (SYVSLIHGKT…WLQYIQPNKV (82 aa)).

The protein belongs to the NAD-dependent DNA ligase family. LigA subfamily. It depends on Mg(2+) as a cofactor. Mn(2+) serves as cofactor.

The catalysed reaction is NAD(+) + (deoxyribonucleotide)n-3'-hydroxyl + 5'-phospho-(deoxyribonucleotide)m = (deoxyribonucleotide)n+m + AMP + beta-nicotinamide D-nucleotide.. Its function is as follows. DNA ligase that catalyzes the formation of phosphodiester linkages between 5'-phosphoryl and 3'-hydroxyl groups in double-stranded DNA using NAD as a coenzyme and as the energy source for the reaction. It is essential for DNA replication and repair of damaged DNA. The polypeptide is DNA ligase (Ehrlichia ruminantium (strain Welgevonden)).